The primary structure comprises 448 residues: tRNA-2-methylthio-N(6)-dimethylallyladenosine synthase (448 aa).

The MTTase N-terminal domain occupies 2 to 119 (KKLYIKTFGC…LSDLIAKRRE (118 aa)). [4Fe-4S] cluster is bound by residues cysteine 11, cysteine 48, cysteine 82, cysteine 156, cysteine 160, and cysteine 163. Residues 142-377 (RQTRGSAYVS…LVESQANQIS (236 aa)) enclose the Radical SAM core domain. Residues 378-444 (QKMLGNIERV…NYTLRGKLVE (67 aa)) form the TRAM domain.

This sequence belongs to the methylthiotransferase family. MiaB subfamily. In terms of assembly, monomer. [4Fe-4S] cluster serves as cofactor.

Its subcellular location is the cytoplasm. It carries out the reaction N(6)-dimethylallyladenosine(37) in tRNA + (sulfur carrier)-SH + AH2 + 2 S-adenosyl-L-methionine = 2-methylsulfanyl-N(6)-dimethylallyladenosine(37) in tRNA + (sulfur carrier)-H + 5'-deoxyadenosine + L-methionine + A + S-adenosyl-L-homocysteine + 2 H(+). Functionally, catalyzes the methylthiolation of N6-(dimethylallyl)adenosine (i(6)A), leading to the formation of 2-methylthio-N6-(dimethylallyl)adenosine (ms(2)i(6)A) at position 37 in tRNAs that read codons beginning with uridine. The sequence is that of tRNA-2-methylthio-N(6)-dimethylallyladenosine synthase from Polynucleobacter necessarius subsp. necessarius (strain STIR1).